Consider the following 345-residue polypeptide: MRLSDFDFALPEGLVAQAPVTPRDASRLMVLAPGEGAPAHRGFADLPELLAPGDLLVFNDTRVIPARLLGHKASGGKVELLLCEPLEGGLGRRWRAMGQASKPIREGAVLTFDGLEARVDGVEGEGFYRVTLDRQGPELEAALGRAGRIPLPPYIRRAPDAEDAARYQTIWARAPGSAAAPTAGLHFTEPLLARLAARGIRRTAVTLHVGPGTFLPIRGDDLDLHRMHGERYEVSPAAAEELAATRARGGRIVAVGTTSVRTLESAWRDGAVAAGPGRTELFIRPGHPFHAVDAMVTNFHLPRSTLLVLVCAFGGQGRVLAAYREAVARGYRFFSYGDAMLVLRR.

Belongs to the QueA family. Monomer.

The protein localises to the cytoplasm. It carries out the reaction 7-aminomethyl-7-carbaguanosine(34) in tRNA + S-adenosyl-L-methionine = epoxyqueuosine(34) in tRNA + adenine + L-methionine + 2 H(+). It functions in the pathway tRNA modification; tRNA-queuosine biosynthesis. Its function is as follows. Transfers and isomerizes the ribose moiety from AdoMet to the 7-aminomethyl group of 7-deazaguanine (preQ1-tRNA) to give epoxyqueuosine (oQ-tRNA). This chain is S-adenosylmethionine:tRNA ribosyltransferase-isomerase, found in Anaeromyxobacter sp. (strain K).